The primary structure comprises 294 residues: Large ribosomal subunit protein uL18 (294 aa).

Residues 247–275 (RADPSPSAKKAAKPSKRHTAKRLTYDERK) form a disordered region. Basic residues predominate over residues 256-267 (KAAKPSKRHTAK).

This sequence belongs to the universal ribosomal protein uL18 family. Component of the large ribosomal subunit (LSU).

The protein localises to the cytoplasm. It localises to the nucleus. In terms of biological role, component of the ribosome, a large ribonucleoprotein complex responsible for the synthesis of proteins in the cell. The small ribosomal subunit (SSU) binds messenger RNAs (mRNAs) and translates the encoded message by selecting cognate aminoacyl-transfer RNA (tRNA) molecules. The large subunit (LSU) contains the ribosomal catalytic site termed the peptidyl transferase center (PTC), which catalyzes the formation of peptide bonds, thereby polymerizing the amino acids delivered by tRNAs into a polypeptide chain. The nascent polypeptides leave the ribosome through a tunnel in the LSU and interact with protein factors that function in enzymatic processing, targeting, and the membrane insertion of nascent chains at the exit of the ribosomal tunnel. The sequence is that of Large ribosomal subunit protein uL18 (rpl-5) from Caenorhabditis briggsae.